The following is a 342-amino-acid chain: uncharacterized protein (342 aa).

A MurNAc-LAA domain is found at 3-173 (IAIRGGHNFL…LIGYLIAKGI (171 aa)).

The protein to C.perfringens CPE1502.

This is an uncharacterized protein from Clostridium perfringens.